Here is an 88-residue protein sequence, read N- to C-terminus: Small ribosomal subunit protein bS20 (88 aa).

A disordered region spans residues 1–20 (MANTKSARKSLIKSKQQRKC).

Belongs to the bacterial ribosomal protein bS20 family.

Binds directly to 16S ribosomal RNA. The chain is Small ribosomal subunit protein bS20 from Blochmanniella pennsylvanica (strain BPEN).